Consider the following 133-residue polypeptide: U-scoloptoxin(11)-Sm1a (133 aa).

Residues 1–19 (MIWFLAFILFLAAGELVSS) form the signal peptide.

Belongs to the scoloptoxin-11 family. Contains 10 disulfide bonds. In terms of tissue distribution, expressed by the venom gland.

The protein localises to the secreted. The polypeptide is U-scoloptoxin(11)-Sm1a (Scolopendra morsitans (Tanzanian blue ringleg centipede)).